A 319-amino-acid polypeptide reads, in one-letter code: Acetyl-coenzyme A carboxylase carboxyl transferase subunit alpha (319 aa).

Residues 35 to 296 form the CoA carboxyltransferase C-terminal domain; sequence NIDEEVQRLR…KTQLLADLED (262 aa).

The protein belongs to the AccA family. Acetyl-CoA carboxylase is a heterohexamer composed of biotin carboxyl carrier protein (AccB), biotin carboxylase (AccC) and two subunits each of ACCase subunit alpha (AccA) and ACCase subunit beta (AccD).

It is found in the cytoplasm. It catalyses the reaction N(6)-carboxybiotinyl-L-lysyl-[protein] + acetyl-CoA = N(6)-biotinyl-L-lysyl-[protein] + malonyl-CoA. It functions in the pathway lipid metabolism; malonyl-CoA biosynthesis; malonyl-CoA from acetyl-CoA: step 1/1. Its function is as follows. Component of the acetyl coenzyme A carboxylase (ACC) complex. First, biotin carboxylase catalyzes the carboxylation of biotin on its carrier protein (BCCP) and then the CO(2) group is transferred by the carboxyltransferase to acetyl-CoA to form malonyl-CoA. The polypeptide is Acetyl-coenzyme A carboxylase carboxyl transferase subunit alpha (Edwardsiella ictaluri (strain 93-146)).